Here is a 214-residue protein sequence, read N- to C-terminus: DNA-binding protein HupB (214 aa).

Lys3 is modified (N6-acetyllysine). At Lys3 the chain carries N6-succinyllysine. A phosphothreonine mark is found at Thr43 and Thr45. N6-acetyllysine is present on residues Lys72, Lys86, and Lys103. Positions 100 to 214 (PAVKRGVGAS…KKATARRGRK (115 aa)) are disordered. A compositionally biased stretch (low complexity) spans 102 to 112 (VKRGVGASAAK). Residue Lys113 is modified to N6-succinyllysine. The span at 113–214 (KVAKKAPAKK…KKATARRGRK (102 aa)) shows a compositional bias: basic residues. N6-acetyllysine occurs at positions 116 and 133. The residue at position 142 (Lys142) is an N6-succinyllysine. An N6-acetyllysine mark is found at Lys146 and Lys167.

This sequence belongs to the bacterial histone-like protein family. Long actinobacterial subfamily. Oligomerizes. Homodimer; the crystallized protein is missing the C-terminal 105 residues. Interacts with topoisomerase 1 (topA). Interacts with Eis. Interacts with NAD-dependent protein deacylase NPD (MRA_1161). Interacts with MRA_0812 CoA transferase. Phosphorylated in vivo on Ser and Thr-residues; the protein is degraded during purification so most sites were not identified, but at least one of Thr-43 and/or Thr-45 are modified in vivo. In vitro at least PknE, PknF and PknB phosphorylate HupB; PknE is the most active and phosphorylates many sites in vitro including Thr-43 and Thr-45. In terms of processing, acetylated on 8 Lys residues in vivo (probably by Eis). In vitro acetylated by Eis on 28 residues (strains H37Rv and H37Ra), many more than those identified in vivo. Also acetylated by MRA_0812. Deacetylated in vitro by NAD-dependent protein deacylase NPD (MRA_1161). Post-translationally, succinylated in vivo and in vitro by MRA_0812 and by Eis; only 3 residues are found to be succinylated in vivo, while 27 are modifed in vitro by MRA_0812 and 32 are succinylated by Eis. NAD-dependent protein deacylase (MRA_1161) desuccinylates this protein.

Its subcellular location is the cytoplasm. It is found in the nucleoid. It carries out the reaction 4 Fe(2+) + O2 + 4 H(+) = 4 Fe(3+) + 2 H2O. With respect to regulation, two trans-stilbene derivatives, 4,4'-[(E)-ethene-1,2 diylbis({5[(phenylcarbonyl)amino]benzene-2,1-diyl}sulfonylimino)] dibenzoic acid and its methoxy derivative 4,4'-[1,2-ethenediylbis({5-[(4-methoxybenzoyl)amino]-2,1phenylene}sulfonylimino)] dibenzoic acid, respectively SD1 and SD4, inhibit DNA binding with 50% inhibition at 20 uM for SD1 and 1.7 uM for SD4. SD1 and SD4 have minimal inhibitory concentrations of 400 and 800 uM on strain H37Ra respectively. In terms of biological role, a nucleoid-associated protein (NAP) that plays a role in local chromosome architecture. Binds DNA non-sequence specifically; in vitro phosphorylation of an N-terminal fragment decreases DNA-binding. Stimulates supercoiling relaxation by topoisomerase 1 (Top1, topA), at higher than 80 uM inhibits relaxation, has no effect on DNA gyrase; the effect is independent of DNA-binding. Increases the intervening strand passage activity of Top1 that occurs between the two catalytic trans-esterification reactions. Does not bind ssDNA, probably helps condense chromosomes. Binds dsDNA; in vitro acetylated protein binds 10-fold less well to DNA (note in vitro acetylated protein is more heavily modified than in vivo modified protein). In vitro acetylated protein compacts DNA less well than unmodified protein. In vitro succinylated DNA bind dsDNA less well than unmodified protein (note in vitro succinylated protein is more heavily modified than in vivo modified protein). Its function is as follows. Has ferroxidase activity, converts Fe(2+) into Fe(3+). Binds Fe(3+) but not Fe(2+); prevents the generation of hydroxyl radicals by the Fenton reaction and thus protects DNA from damage. May function in iron storage. Required for biofilm formation; trimethylation by recombinant human SUV39H1 (a histone methyltransferase) inhibits biofilm formation. Probably influences transcription. RNase E and HupB jointly contribute to cellular adaptation to changing growth conditions and survival during antibiotic treatment and in the host. This chain is DNA-binding protein HupB, found in Mycobacterium tuberculosis (strain ATCC 25177 / H37Ra).